Here is a 265-residue protein sequence, read N- to C-terminus: Glutamate racemase (265 aa).

Substrate contacts are provided by residues Asp9–Ser10 and Tyr41–Ser42. Cys73 acts as the Proton donor/acceptor in catalysis. Asn74–Thr75 lines the substrate pocket. Catalysis depends on Cys184, which acts as the Proton donor/acceptor. Thr185 to His186 lines the substrate pocket.

The protein belongs to the aspartate/glutamate racemases family.

The enzyme catalyses L-glutamate = D-glutamate. The protein operates within cell wall biogenesis; peptidoglycan biosynthesis. In terms of biological role, provides the (R)-glutamate required for cell wall biosynthesis. This is Glutamate racemase from Actinobacillus pleuropneumoniae serotype 3 (strain JL03).